The following is a 378-amino-acid chain: MANGNSFGVLFCVTTYGESHGGAVGVVVDGCPPRLPLSEADIQAELDRRRPGQSPITTPRQEADRCQILSGVFQGFTLGTPIHILVRNQDARPQDYQEMATTFRPSHADATYQAKYGIRNWQGGGRASARETIGRVAAGAIAKKILRLAAGVEILAYVQRVKDVEAQVDPSSVTAEQVEANIVRCPDPQAAAAMIQKIEEAAREGDSLGGVVECVARRVPRGLGSPVFDKLEADLAKAVMSLPASKGFEIGSGFAGTYLTGKQHNDEFYMTPGGWRTRSNRSGGIQGGISNGEDIVLRVAFKPTATIRQPQNTVTLNGQETVLAARGRHDPCVLPRAVPMVEAMVALVLCDHLLRHHAQCGSLVLSEVPLPVAAAPQA.

The disordered stretch occupies residues 42–61 (IQAELDRRRPGQSPITTPRQ). R49 provides a ligand contact to NADP(+). Residues 126–128 (RAS), G287, 302–306 (KPTAT), and R328 contribute to the FMN site.

The protein belongs to the chorismate synthase family. In terms of assembly, homotetramer. FMNH2 is required as a cofactor.

The catalysed reaction is 5-O-(1-carboxyvinyl)-3-phosphoshikimate = chorismate + phosphate. It functions in the pathway metabolic intermediate biosynthesis; chorismate biosynthesis; chorismate from D-erythrose 4-phosphate and phosphoenolpyruvate: step 7/7. In terms of biological role, catalyzes the anti-1,4-elimination of the C-3 phosphate and the C-6 proR hydrogen from 5-enolpyruvylshikimate-3-phosphate (EPSP) to yield chorismate, which is the branch point compound that serves as the starting substrate for the three terminal pathways of aromatic amino acid biosynthesis. This reaction introduces a second double bond into the aromatic ring system. This chain is Chorismate synthase, found in Synechococcus sp. (strain JA-2-3B'a(2-13)) (Cyanobacteria bacterium Yellowstone B-Prime).